Consider the following 483-residue polypeptide: Cobyric acid synthase (483 aa).

One can recognise a GATase cobBQ-type domain in the interval leucine 248–alanine 435. Cysteine 329 acts as the Nucleophile in catalysis. The active site involves histidine 427.

Belongs to the CobB/CobQ family. CobQ subfamily.

It functions in the pathway cofactor biosynthesis; adenosylcobalamin biosynthesis. Functionally, catalyzes amidations at positions B, D, E, and G on adenosylcobyrinic A,C-diamide. NH(2) groups are provided by glutamine, and one molecule of ATP is hydrogenolyzed for each amidation. This Pseudomonas fluorescens (strain ATCC BAA-477 / NRRL B-23932 / Pf-5) protein is Cobyric acid synthase.